The following is a 329-amino-acid chain: MFSLSFIVIAVIIIVALLILFSFVPIGLWISALAAGVHVGIGTLVGMRLRRVSPRKVIAPLIKAHKAGLALTTNQLESHYLAGGNVDRVVDANIAAQRADIDLPFERAAAIDLAGRDVLEAVQMSVNPKVIETPFIAGVAMNGIEVKAKARITVRANIARLVGGAGEETIIARVGEGIVSTIGSSKHHTEVLENPDNISKTVLSKGLDSGTAFEILSIDIADVDISKNIGADLQTEQALADKNIAQAKAEERRAMAVATEQEMKARVQEMHAKVVEAESEVPLAMAEALRSGNISVKDYYNLKNIEADTGMRNAINKRTDQSDDESPEH.

Helical transmembrane passes span 6–26 and 27–47; these read FIVI…FVPI and GLWI…LVGM.

It belongs to the flotillin-like FloA family. Homooligomerizes.

It localises to the cell membrane. The protein localises to the membrane raft. Functionally, found in functional membrane microdomains (FMM) that may be equivalent to eukaryotic membrane rafts. FMMs are highly dynamic and increase in number as cells age. Flotillins are thought to be important factors in membrane fluidity. The sequence is that of Flotillin-like protein FloA from Staphylococcus aureus (strain JH1).